The following is a 264-amino-acid chain: LIMR family protein SELMODRAFT_416716 (264 aa).

The next 4 membrane-spanning stretches (helical) occupy residues 23–43, 96–116, 194–214, and 225–245; these read VVIL…VIGY, ILFT…LIFA, IIWL…FPFL, and WGLL…MSVI.

This sequence belongs to the LIMR family.

The protein localises to the membrane. This chain is LIMR family protein SELMODRAFT_416716, found in Selaginella moellendorffii (Spikemoss).